The chain runs to 312 residues: MSKEWIEVSIIVSSEAVEAVSGILYNTEVEGISIEDTKDIEFKKKHPGDWDYFDESLLKVEEGAVIKAYYRESESFYGYLKYIRHNINNLENLGIDKGKGLVVVNKVNEEDWENGWKKYYKPYRAGEKIVIKPLWEEYENKKQDIVVEIDPGMAFGTGTHETTKMCIKALEKYVRPESNVFDIGTGSGILAIAASKLGAKEVTAVDLDPVAVESALKNISYNNIKNIKVFHGNLMEGVHGKADILVINIIADVILSLTEEVKKFLVSEGIFISSGIIIDRKEEVVENLQNNGFCIREINEDGEWVCIVSTIK.

Positions 163, 184, 206, and 248 each coordinate S-adenosyl-L-methionine.

Belongs to the methyltransferase superfamily. PrmA family.

Its subcellular location is the cytoplasm. It catalyses the reaction L-lysyl-[protein] + 3 S-adenosyl-L-methionine = N(6),N(6),N(6)-trimethyl-L-lysyl-[protein] + 3 S-adenosyl-L-homocysteine + 3 H(+). Functionally, methylates ribosomal protein L11. This Clostridium kluyveri (strain NBRC 12016) protein is Ribosomal protein L11 methyltransferase.